Here is a 243-residue protein sequence, read N- to C-terminus: MSKKITKKDEVEENILNLINKANRPYNYQMIEAAFPSMGKTQIVKTLKSLGEQGKLTFKEYNKAIIYWRIQDTGPKLDEQGYEIPQESIHDLNRKLDGINRQLEVEQDTLKSLISQSKQLNNQLSDEQIQKEVNQLSTENKELESKLLTFQTKEIMSDKDKQRLDDTIKKARSEWVKRKALFRDILDQVLERSNKKKKDLQEDIGWETDEDLKIQMIPDYSKPLSQQTLSSTNDESPFKKQKK.

Positions 86 to 153 (QESIHDLNRK…ESKLLTFQTK (68 aa)) form a coiled coil. The tract at residues 217–243 (IPDYSKPLSQQTLSSTNDESPFKKQKK) is disordered. Positions 223-235 (PLSQQTLSSTNDE) are enriched in polar residues.

The protein belongs to the HOP2 family.

It localises to the nucleus. Required for proper homologous pairing and efficient cross-over and intragenic recombination during meiosis. In Dictyostelium discoideum (Social amoeba), this protein is Homologous-pairing protein 2 homolog (hop2).